We begin with the raw amino-acid sequence, 64 residues long: Large ribosomal subunit protein bL28 (64 aa).

Residues Met1 to Ser21 form a disordered region.

This sequence belongs to the bacterial ribosomal protein bL28 family.

This Mycoplasma genitalium (strain ATCC 33530 / DSM 19775 / NCTC 10195 / G37) (Mycoplasmoides genitalium) protein is Large ribosomal subunit protein bL28.